Consider the following 238-residue polypeptide: Laccase-S (238 aa).

2 Plastocyanin-like domains span residues 4–87 (NVIA…YDPA) and 100–238 (HTII…IARY). A glycan (N-linked (GlcNAc...) asparagine) is linked at N8. Cu cation contacts are provided by H21, H23, H66, and H68. An intrachain disulfide couples C74 to C162. N165 is a glycosylation site (N-linked (GlcNAc...) asparagine).

It belongs to the multicopper oxidase family. In terms of assembly, monomer. The cofactor is Cu cation.

It is found in the secreted. The catalysed reaction is 4 hydroquinone + O2 = 4 benzosemiquinone + 2 H2O. With respect to regulation, activity is strongly promoted by toluene. Activity is promoted by magnesium, potassium, cadmium, zinc, nickel, sodium, lead and manganese ions. Completely inhibited by IAA (cysteine protease inhibitor), PMSF (serine protease inhibitor), DEP (histidine protease inhibitor) and NAI (tyrosine protease inhibitor). Inhibited by ethanol, acetone, SDS, and EDTA. Activity is strongly inhibited by mercury ions. Also inhibited by lithium, aluminum, calcium, barium and iron ions. Functionally, lignin degradation and detoxification of lignin-derived products. Has activity towards 2,2'-azino-bis(3-ethylbenzothiazoline-6-sulfonic acid) (ABTS). This chain is Laccase-S, found in Trametes hirsuta (White-rot fungus).